A 296-amino-acid chain; its full sequence is Glycine N-acyltransferase (296 aa).

N6-acetyllysine; alternate is present on Lys16. N6-succinyllysine; alternate is present on Lys16. The residue at position 113 (Lys113) is an N6-acetyllysine. N6-acetyllysine; alternate is present on residues Lys127, Lys141, and Lys142. 3 positions are modified to N6-succinyllysine; alternate: Lys127, Lys141, and Lys142. An N6-acetyllysine mark is found at Lys159 and Lys167. At Lys169 the chain carries N6-succinyllysine. 2 positions are modified to N6-acetyllysine; alternate: Lys183 and Lys256. N6-succinyllysine; alternate is present on residues Lys183 and Lys256. Position 267 is an N6-succinyllysine (Lys267).

Belongs to the glycine N-acyltransferase family.

The protein localises to the mitochondrion. It catalyses the reaction an acyl-CoA + glycine = an N-acylglycine + CoA + H(+). It carries out the reaction benzoyl-CoA + glycine = N-benzoylglycine + CoA + H(+). In terms of biological role, mitochondrial acyltransferase which transfers an acyl group to the N-terminus of glycine and glutamine, although much less efficiently. Can conjugate a multitude of substrates to form a variety of N-acylglycines, thereby detoxify xenobiotics, such as benzoic acid or salicylic acid, and endogenous organic acids, such as isovaleric acid. The protein is Glycine N-acyltransferase (Glyat) of Mus musculus (Mouse).